The sequence spans 401 residues: NALCN channel auxiliary factor 2 (401 aa).

The chain crosses the membrane as a helical span at residues 42–62 (LASLLFFTALLSDHLWLCAGG). N-linked (GlcNAc...) asparagine glycosylation is found at Asn77, Asn97, Asn153, and Asn178. Residues 362–382 (LCVLVLFLLHTFISITTLQHC) traverse the membrane as a helical segment.

This sequence belongs to the NALF family.

Its subcellular location is the membrane. In terms of biological role, probable component of the NALCN channel complex, a channel that regulates the resting membrane potential and controls neuronal excitability. This is NALCN channel auxiliary factor 2 (nalf2) from Danio rerio (Zebrafish).